The primary structure comprises 307 residues: 4-hydroxybenzoate octaprenyltransferase (307 aa).

The next 9 membrane-spanning stretches (helical) occupy residues 19-39 (PVGI…AAMG), 48-68 (VTAG…AILM), 105-125 (AIAA…FLPI), 127-147 (VFYW…MKRY), 150-170 (LPQV…YVAI), 172-192 (GAAD…TVAY), 221-241 (VIII…VMWH), 243-263 (FVPT…AMMF), and 282-302 (FLAN…ACVW).

The protein belongs to the UbiA prenyltransferase family. Requires Mg(2+) as cofactor.

It is found in the cell inner membrane. The enzyme catalyses all-trans-octaprenyl diphosphate + 4-hydroxybenzoate = 4-hydroxy-3-(all-trans-octaprenyl)benzoate + diphosphate. Its pathway is cofactor biosynthesis; ubiquinone biosynthesis. Functionally, catalyzes the prenylation of para-hydroxybenzoate (PHB) with an all-trans polyprenyl group. Mediates the second step in the final reaction sequence of ubiquinone-8 (UQ-8) biosynthesis, which is the condensation of the polyisoprenoid side chain with PHB, generating the first membrane-bound Q intermediate 3-octaprenyl-4-hydroxybenzoate. The protein is 4-hydroxybenzoate octaprenyltransferase of Psychrobacter arcticus (strain DSM 17307 / VKM B-2377 / 273-4).